We begin with the raw amino-acid sequence, 286 residues long: Pantothenate synthetase (286 aa).

An ATP-binding site is contributed by 30 to 37; that stretch reads MGCFHQGH. Histidine 37 (proton donor) is an active-site residue. Position 61 (glutamine 61) interacts with (R)-pantoate. Position 61 (glutamine 61) interacts with beta-alanine. Residue 147–150 participates in ATP binding; the sequence is GEKD. Glutamine 153 lines the (R)-pantoate pocket. 184–187 contacts ATP; it reads MSSR.

It belongs to the pantothenate synthetase family. As to quaternary structure, homodimer.

It is found in the cytoplasm. It catalyses the reaction (R)-pantoate + beta-alanine + ATP = (R)-pantothenate + AMP + diphosphate + H(+). It functions in the pathway cofactor biosynthesis; (R)-pantothenate biosynthesis; (R)-pantothenate from (R)-pantoate and beta-alanine: step 1/1. Functionally, catalyzes the condensation of pantoate with beta-alanine in an ATP-dependent reaction via a pantoyl-adenylate intermediate. This chain is Pantothenate synthetase, found in Desulfotalea psychrophila (strain LSv54 / DSM 12343).